Here is a 434-residue protein sequence, read N- to C-terminus: Urokinase-type plasminogen activator (434 aa).

The N-terminal stretch at 1–20 (MKLIIFLTVTLCTLVTGLDS) is a signal peptide. One can recognise an EGF-like domain in the interval 36 to 72 (QHRECQCLNGGTCITYRFFSQIKRCLCPEGYGGLHCE). 12 disulfides stabilise this stretch: Cys-40-Cys-48, Cys-42-Cys-60, Cys-62-Cys-71, Cys-79-Cys-158, Cys-96-Cys-139, Cys-128-Cys-152, Cys-162-Cys-296, Cys-202-Cys-218, Cys-210-Cys-285, Cys-310-Cys-379, Cys-342-Cys-358, and Cys-369-Cys-397. One can recognise a Kringle domain in the interval 79-158 (CYSGNGEDYR…ETPCSTIEKC (80 aa)). The connecting peptide stretch occupies residues 159 to 172 (ERTCGQRSFSKYFK). Residues 173–421 (IVGGSQAEVE…YLNWIDSNMN (249 aa)) enclose the Peptidase S1 domain. Residue His-217 is the Charge relay system of the active site. Asn-228 is a glycosylation site (N-linked (GlcNAc...) asparagine). The Charge relay system role is filled by Asp-272. Catalysis depends on Ser-373, which acts as the Charge relay system.

This sequence belongs to the peptidase S1 family.

Its subcellular location is the secreted. The catalysed reaction is Specific cleavage of Arg-|-Val bond in plasminogen to form plasmin.. Specifically cleaves the zymogen plasminogen to form the active enzyme plasmin. This Gallus gallus (Chicken) protein is Urokinase-type plasminogen activator (PLAU).